The following is a 59-amino-acid chain: Small ribosomal subunit protein bS21 (59 aa).

Residues 36–59 (EHYEKPSVKRKKKAEAAKRNKSKF) form a disordered region. The span at 43 to 59 (VKRKKKAEAAKRNKSKF) shows a compositional bias: basic residues.

The protein belongs to the bacterial ribosomal protein bS21 family.

The chain is Small ribosomal subunit protein bS21 from Alkaliphilus oremlandii (strain OhILAs) (Clostridium oremlandii (strain OhILAs)).